The sequence spans 316 residues: MTQSPIFLTPVFKEKIWGGTALRDRFGYSIPSESTGECWAISAHPKGPSTVANGPYKGKTLIELWEEHREVFGGVEGDRFPLLTKLLDVKEDTSIKVHPDDYYAGENEEGELGKTECWYIIDCKENAEIIYGHTARSKTELVTMINSGDWEGLLRRIKIKPGDFYYVPSGTLHALCKGALVLETQQNSDATYRVYDYDRLDSNGSPRELHFAKAVNAATVPHVDGYIDESTESRKGITIKTFVQGEYFSVYKWDINGEAEMAQDESFLICSVIEGSGLLKYEDKTCPLKKGDHFILPAQMPDFTIKGTCTLIVSHI.

Zn(2+)-binding residues include His98, Glu116, and His173. The active site involves Arg193.

The protein belongs to the mannose-6-phosphate isomerase type 1 family. Requires Zn(2+) as cofactor.

The catalysed reaction is D-mannose 6-phosphate = D-fructose 6-phosphate. The polypeptide is Putative mannose-6-phosphate isomerase YvyI (yvyI) (Bacillus subtilis (strain 168)).